Reading from the N-terminus, the 772-residue chain is 1,4-alpha-glucan branching enzyme GlgB (772 aa).

The active-site Nucleophile is the D431. The active-site Proton donor is E484.

The protein belongs to the glycosyl hydrolase 13 family. GlgB subfamily. As to quaternary structure, monomer.

It catalyses the reaction Transfers a segment of a (1-&gt;4)-alpha-D-glucan chain to a primary hydroxy group in a similar glucan chain.. It participates in glycan biosynthesis; glycogen biosynthesis. In terms of biological role, catalyzes the formation of the alpha-1,6-glucosidic linkages in glycogen by scission of a 1,4-alpha-linked oligosaccharide from growing alpha-1,4-glucan chains and the subsequent attachment of the oligosaccharide to the alpha-1,6 position. The sequence is that of 1,4-alpha-glucan branching enzyme GlgB from Synechococcus sp. (strain RCC307).